We begin with the raw amino-acid sequence, 200 residues long: Small ribosomal subunit protein uS4 (200 aa).

Basic residues predominate over residues 1 to 13; it reads MARYRGPKQKIAR. Residues 1–44 form a disordered region; it reads MARYRGPKQKIARRFKEPIFGPSKALERKPYPPGQHGQSRRRRE. An S4 RNA-binding domain is found at 92 to 154; sequence ARLDNTVFRM…SQDLEVIQTN (63 aa).

It belongs to the universal ribosomal protein uS4 family. Part of the 30S ribosomal subunit. Contacts protein S5. The interaction surface between S4 and S5 is involved in control of translational fidelity.

One of the primary rRNA binding proteins, it binds directly to 16S rRNA where it nucleates assembly of the body of the 30S subunit. Its function is as follows. With S5 and S12 plays an important role in translational accuracy. The polypeptide is Small ribosomal subunit protein uS4 (Salinibacter ruber (strain DSM 13855 / M31)).